Here is a 545-residue protein sequence, read N- to C-terminus: Chaperonin GroEL 2 (545 aa).

Residues 29–32 (TLGP), 86–90 (DGTTT), Gly-413, 479–481 (NAA), and Asp-495 each bind ATP.

It belongs to the chaperonin (HSP60) family. In terms of assembly, forms a cylinder of 14 subunits composed of two heptameric rings stacked back-to-back. Interacts with the co-chaperonin GroES.

The protein localises to the cytoplasm. It carries out the reaction ATP + H2O + a folded polypeptide = ADP + phosphate + an unfolded polypeptide.. In terms of biological role, together with its co-chaperonin GroES, plays an essential role in assisting protein folding. The GroEL-GroES system forms a nano-cage that allows encapsulation of the non-native substrate proteins and provides a physical environment optimized to promote and accelerate protein folding. The chain is Chaperonin GroEL 2 from Prochlorococcus marinus (strain AS9601).